The following is a 282-amino-acid chain: Putative glycosyltransferase HI_0765 (282 aa).

This sequence belongs to the glycosyltransferase 25 family.

In Haemophilus influenzae (strain ATCC 51907 / DSM 11121 / KW20 / Rd), this protein is Putative glycosyltransferase HI_0765.